We begin with the raw amino-acid sequence, 62 residues long: Large ribosomal subunit protein eL24 (62 aa).

4 residues coordinate Zn(2+): Cys-7, Cys-10, Cys-33, and Cys-37. Residues 7–37 form a C4-type zinc finger; that stretch reads CSFCGKDILPGTGLMYVRNDGSLLWFCSSKC.

Belongs to the eukaryotic ribosomal protein eL24 family. As to quaternary structure, part of the 50S ribosomal subunit. Forms a cluster with proteins L3 and L14. Requires Zn(2+) as cofactor.

In terms of biological role, binds to the 23S rRNA. This Sulfolobus acidocaldarius (strain ATCC 33909 / DSM 639 / JCM 8929 / NBRC 15157 / NCIMB 11770) protein is Large ribosomal subunit protein eL24.